A 253-amino-acid polypeptide reads, in one-letter code: Alpha-acetolactate decarboxylase (253 aa).

It belongs to the alpha-acetolactate decarboxylase family.

It carries out the reaction (2S)-2-acetolactate + H(+) = (R)-acetoin + CO2. It functions in the pathway polyol metabolism; (R,R)-butane-2,3-diol biosynthesis; (R,R)-butane-2,3-diol from pyruvate: step 2/3. Functionally, converts acetolactate into acetoin. The sequence is that of Alpha-acetolactate decarboxylase (alsD) from Bacillus licheniformis (strain ATCC 14580 / DSM 13 / JCM 2505 / CCUG 7422 / NBRC 12200 / NCIMB 9375 / NCTC 10341 / NRRL NRS-1264 / Gibson 46).